Here is a 180-residue protein sequence, read N- to C-terminus: UPF0227 protein KPN78578_10770 (180 aa).

It belongs to the UPF0227 family.

The polypeptide is UPF0227 protein KPN78578_10770 (Klebsiella pneumoniae subsp. pneumoniae (strain ATCC 700721 / MGH 78578)).